Consider the following 67-residue polypeptide: Large ribosomal subunit protein bL35 (67 aa).

A compositionally biased stretch (basic residues) spans Met1–Val16. Residues Met1 to Arg24 are disordered.

The protein belongs to the bacterial ribosomal protein bL35 family.

This chain is Large ribosomal subunit protein bL35, found in Polaromonas naphthalenivorans (strain CJ2).